The chain runs to 940 residues: Chromatin assembly factor 1 subunit FSM (940 aa).

Disordered regions lie at residues 317–473 (NVDD…DPCT), 638–682 (VDSD…FFVP), and 919–940 (KTTQ…PSSQ). Over residues 320–329 (DSQLQKNTST) the composition is skewed to polar residues. Residues 329–439 (TNEKDTQKAQ…LKKQLAIQKQ (111 aa)) adopt a coiled-coil conformation. The span at 330-429 (NEKDTQKAQK…QKRREKEAVQ (100 aa)) shows a compositional bias: basic and acidic residues. Residues 430–440 (LKKQLAIQKQA) are compositionally biased toward low complexity. Residues 445-461 (RFFKNKKDSEKLEKPGG) show a composition bias toward basic and acidic residues. The span at 638–650 (VDSDDEWEEEDPG) shows a compositional bias: acidic residues.

It belongs to the CHAF1A family. In terms of assembly, component of the chromatin assembly factor 1 (CAF-1) complex, composed of FSM (FAS1), FAS2 and MSI1. In embryo, expressed in leaf primordia, coleoptile and radicle. In seedlings, expressed in cell division zone of roots, SAM and leaf primordia. Expressed in floral organ primordia.

The protein resides in the nucleus. Functionally, component of the chromatin assembly factor complex (CAF-1) involved in chromatin assembly following DNA replication and DNA repair. Required for several aspects of development, including apical meristem maintenance by regulating the durations of the S- and G2-phases of the cell cycle through its chromatin assembly activity. This Oryza sativa subsp. japonica (Rice) protein is Chromatin assembly factor 1 subunit FSM (FSM).